A 1010-amino-acid chain; its full sequence is 2-oxoglutarate dehydrogenase-like, mitochondrial (1010 aa).

The N-terminal 107 residues, 1 to 107 (MSQLRLLLFR…RASVSSCTKT (107 aa)), are a transit peptide targeting the mitochondrion. The tract at residues 28 to 47 (GGRRRSSGPPTTIPRSRGGV) is disordered. Positions 130, 143, and 145 each coordinate Ca(2+). R299, D398, N431, I433, and Q663 together coordinate thiamine diphosphate. Residues D398, N431, and I433 each contribute to the Mg(2+) site.

Belongs to the alpha-ketoglutarate dehydrogenase family. As to quaternary structure, the OGDHC complex comprises multiple copies of three catalytic enzyme components, the 2-oxoglutarate dehydrogenase (OGDH/E1), the dihydrolipoamide dehydrogenase (DLST/E2) and the dihydrolipoamide dehydrogenase (DLD/E3). OGDHL/E1-like isoenzyme may replace OGDH in the OGDHC complex in the brain. The presence of either ODGH/E1 or ODGHL/E1-like isoenzyme in the complex may depend on its tissular distribution. Requires thiamine diphosphate as cofactor. Mg(2+) serves as cofactor. The OGDHL-containing OGDHC complex is present in the brain, but not in the heart.

The protein localises to the mitochondrion matrix. The enzyme catalyses N(6)-[(R)-lipoyl]-L-lysyl-[protein] + 2-oxoglutarate + H(+) = N(6)-[(R)-S(8)-succinyldihydrolipoyl]-L-lysyl-[protein] + CO2. 2-oxoglutarate dehydrogenase (E1-like) component of the 2-oxoglutarate dehydrogenase multienzyme complex (OGDHC) which mediates the decarboxylation of alpha-ketoglutarate in the tricarboxylic acid cycle. The OGDHC complex catalyzes the overall conversion of 2-oxoglutarate to succinyl-CoA and CO(2) while reducing NAD(+) to NADH. The OGDHC complex is mainly active in the mitochondrion. Involved in the inhibition of cell proliferation and in apoptosis. The protein is 2-oxoglutarate dehydrogenase-like, mitochondrial of Rattus norvegicus (Rat).